The following is a 255-amino-acid chain: Ribonuclease PH (255 aa).

Phosphate contacts are provided by residues Arg-86 and 124–126 (GTR).

This sequence belongs to the RNase PH family. Homohexameric ring arranged as a trimer of dimers.

The catalysed reaction is tRNA(n+1) + phosphate = tRNA(n) + a ribonucleoside 5'-diphosphate. Its function is as follows. Phosphorolytic 3'-5' exoribonuclease that plays an important role in tRNA 3'-end maturation. Removes nucleotide residues following the 3'-CCA terminus of tRNAs; can also add nucleotides to the ends of RNA molecules by using nucleoside diphosphates as substrates, but this may not be physiologically important. Probably plays a role in initiation of 16S rRNA degradation (leading to ribosome degradation) during starvation. In Aquifex aeolicus (strain VF5), this protein is Ribonuclease PH.